Consider the following 904-residue polypeptide: DNA replication licensing factor MCM2 (904 aa).

The segment covering 1–12 (MAESSESLSASS) has biased composition (low complexity). Residues 1-166 (MAESSESLSA…ATEDGEEDEE (166 aa)) are disordered. Residue A2 is modified to N-acetylalanine. Residues 2 to 257 (AESSESLSAS…LPEAPAELLQ (256 aa)) form an interaction with KAT7 region. Phosphoserine occurs at positions 12 and 21. T25 is modified (phosphothreonine). A phosphoserine mark is found at S26, S27, and S32. T39 bears the Phosphothreonine mark. S40 carries the post-translational modification Phosphoserine; by CDC7. S41 carries the post-translational modification Phosphoserine. S53 is modified (phosphoserine; by CDC7). T59 is subject to Phosphothreonine. Positions 61–130 (GPMEEEEDGE…DREAGRGLGR (70 aa)) are interaction with DNJC9. Acidic residues predominate over residues 62–73 (PMEEEEDGEELI). Basic and acidic residues predominate over residues 76-85 (GMERDYRPIP). The span at 88–104 (DVYEAEGLALDDEDVEE) shows a compositional bias: acidic residues. S108 bears the Phosphoserine mark. Basic and acidic residues predominate over residues 111–125 (EAAERTMRQRDREAG). A Phosphotyrosine modification is found at Y137. A phosphoserine mark is found at S139 and S140. K178 participates in a covalent cross-link: Glycyl lysine isopeptide (Lys-Gly) (interchain with G-Cter in SUMO2). Position 216 is an N6-acetyllysine (K216). The segment at 329-355 (CSKCNFVLGPFCQSQNQEVKPGSCPEC) adopts a C4-type zinc-finger fold. Phosphoserine is present on residues S381 and S484. The 208-residue stretch at 473-680 (IGEKIFASIA…QDEMLARFVV (208 aa)) folds into the MCM domain. Residues S530 and Q531 each contribute to the ADP site. The Arginine finger motif lies at 655–658 (SRFD).

It belongs to the MCM family. In terms of assembly, component of the MCM2-7 complex. The complex forms a toroidal hexameric ring with the proposed subunit order MCM2-MCM6-MCM4-MCM7-MCM3-MCM5. Component of the CMG helicase complex, a hexameric ring of related MCM2-7 subunits stabilized by CDC45 and the tetrameric GINS complex. Interacts with DBF4. Interacts with KAT7. May interact with MCM10. Component of the replisome complex composed of at least DONSON, MCM2, MCM7, PCNA and TICRR. Forms a co-chaperone complex with DNAJC9 and histone H3.3-H4 heterodimers. Within the complex, interacts (via N-terminus) with DNAJC9 (via C-terminus); the interaction is histone-dependent. Interacts with AGER/RAGE; the interaction is increased following DNA replication stress and stabilizes the MCM2-7 complex at replication forks. Post-translationally, phosphorylated on Ser-108 by ATR in proliferating cells. Ser-108 proliferation is increased by genotoxic agents. Ser-40 is mediated by the CDC7-DBF4 and CDC7-DBF4B complexes, while Ser-53 phosphorylation is only mediated by the CDC7-DBF4 complex. Phosphorylation by the CDC7-DBF4 complex during G1/S phase is required for the initiation of DNA replication. Acetylated by MCM3AP. In terms of processing, O-glycosylated (O-GlcNAcylated), in a cell cycle-dependent manner.

The protein localises to the nucleus. It localises to the chromosome. The enzyme catalyses ATP + H2O = ADP + phosphate + H(+). Its function is as follows. Acts as a component of the MCM2-7 complex (MCM complex) which is the replicative helicase essential for 'once per cell cycle' DNA replication initiation and elongation in eukaryotic cells. Core component of CDC45-MCM-GINS (CMG) helicase, the molecular machine that unwinds template DNA during replication, and around which the replisome is built. The active ATPase sites in the MCM2-7 ring are formed through the interaction surfaces of two neighboring subunits such that a critical structure of a conserved arginine finger motif is provided in trans relative to the ATP-binding site of the Walker A box of the adjacent subunit. The six ATPase active sites, however, are likely to contribute differentially to the complex helicase activity. Required for the entry in S phase and for cell division. Plays a role in terminally differentiated hair cells development of the cochlea and induces cells apoptosis. The protein is DNA replication licensing factor MCM2 (Mcm2) of Mus musculus (Mouse).